The sequence spans 470 residues: Velvet complex subunit B (470 aa).

Disordered stretches follow at residues 1-148 and 223-321; these read MNSS…EEGT and VRSS…NPLF. The span at 15–37 shows a compositional bias: low complexity; that stretch reads PGPGYSSSVPPPIHAYQQQQQHQ. The segment covering 38–49 has biased composition (pro residues); that stretch reads HPPPSLLPPPPT. The span at 74–86 shows a compositional bias: basic residues; sequence HQHHAPPPPHHHS. Over residues 102–124 the composition is skewed to pro residues; the sequence is NQYPRPHPLPPSRNDEPPPPSSE. The 306-residue stretch at 147 to 452 folds into the Velvet domain; sequence GTGLKYSLDV…ALQGIKIPIR (306 aa). Residues 232 to 241 show a composition bias toward low complexity; it reads GASSNNYSYS. The segment covering 242-255 has biased composition (polar residues); that stretch reads TLEPSTPSYQQQAL. A compositionally biased stretch (low complexity) spans 280–301; that stretch reads QQGYGQAPSYQSSSSYGPPQQY. Positions 307 to 318 are enriched in polar residues; it reads GYNTDPPASSAN.

This sequence belongs to the velvet family. VelB subfamily. As to quaternary structure, component of the heterotrimeric velvet complex composed of laeA, veA and velB; VeA acting as a bridging protein between laeA and velB. Forms a heterodimeric complex with vosA; the formation of the velB-vosA complex is light-dependent.

It localises to the nucleus. The protein localises to the cytoplasm. Its function is as follows. Component of the velvet transcription factor complex that controls sexual/asexual developmental ratio in response to light, promoting sexual development in the darkness while stimulating asexual sporulation under illumination. The velvet complex acts as a global regulator for secondary metabolite gene expression. Component of the velB-VosA heterodimeric complex that plays a dual role in activating genes associated with spore maturation and repressing certain development-associated genes. The complex binds DNA through the DNA-binding domain of vosA that recognizes an 11-nucleotide consensus sequence 5'-CTGGCCGCGGC-3' consisting of two motifs in the promoters of key developmental regulatory genes. Controls the expression of the pink pigment aurofusarin and the mycotoxin deoxynivalenol gene clusters. Regulates hyphae formation, hyphal hydrophobicity and conidiation. Regulates of cell wall integrity and pathogenicity. In Gibberella zeae (strain ATCC MYA-4620 / CBS 123657 / FGSC 9075 / NRRL 31084 / PH-1) (Wheat head blight fungus), this protein is Velvet complex subunit B.